The chain runs to 332 residues: Twinfilin-1 (332 aa).

One can recognise an ADF-H 1 domain in the interval 5–132; that stretch reads SGIVAEQALL…VDLKNFDSAR (128 aa). 2 positions are modified to phosphoserine: Ser-167 and Ser-172. The ADF-H 2 domain occupies 173-300; it reads PLSLTFRVNS…DKSLLMATNK (128 aa). Positions 301 to 332 are disordered; that stretch reads EDSLDHGSNPDLPNKSNLKFNKPKGPLRKRRT. The segment covering 321–332 has biased composition (basic residues); it reads NKPKGPLRKRRT.

This sequence belongs to the actin-binding proteins ADF family. Twinfilin subfamily. As to quaternary structure, interacts with G-actin; ADP-actin form.

Its subcellular location is the cytoplasm. The protein localises to the cytoskeleton. In terms of biological role, actin-binding protein involved in motile and morphological processes. Inhibits actin polymerization, likely by sequestering G-actin. Prevents actin filament assembly by forming a 1:1 complex with actin monomers, and inhibits the nucleotide exchange reaction of actin monomers. This chain is Twinfilin-1 (TWF1), found in Saccharomyces cerevisiae (strain ATCC 204508 / S288c) (Baker's yeast).